The chain runs to 104 residues: Large ribosomal subunit protein bL21 (104 aa).

It belongs to the bacterial ribosomal protein bL21 family. As to quaternary structure, part of the 50S ribosomal subunit. Contacts protein L20.

Its function is as follows. This protein binds to 23S rRNA in the presence of protein L20. The polypeptide is Large ribosomal subunit protein bL21 (Streptococcus thermophilus (strain ATCC BAA-491 / LMD-9)).